The sequence spans 71 residues: Small ribosomal subunit protein bS21 (71 aa).

Belongs to the bacterial ribosomal protein bS21 family.

This is Small ribosomal subunit protein bS21 from Alteromonas mediterranea (strain DSM 17117 / CIP 110805 / LMG 28347 / Deep ecotype).